Consider the following 313-residue polypeptide: Apolipoprotein E (313 aa).

The first 18 residues, 1–18 (MKVLWVALVITLLAGCQA), serve as a signal peptide directing secretion. Repeat copies occupy residues 79 to 100 (VLMDETMKEVKAYREELEEQLG), 101 to 122 (PIAQETQARVSKELQAAQARLA), 123 to 144 (SDMEDVRSRLAQYRSEVQAVMG), 145 to 166 (QTTDELRGRLASHLRKLRKRLL), 167 to 188 (RDAEDLQKRLAVYRAGAVEGSE), 189 to 209 (RSVSAIRERLGPLMEKGRGRA), 210 to 229 (GTLASQTLRERAEAWHQKLR), and 230 to 251 (GRVEEMGTQARDHLEEIREQLE). The 8 X 22 AA approximate tandem repeats stretch occupies residues 79-251 (VLMDETMKEV…HLEEIREQLE (173 aa)). The LDL and other lipoprotein receptors binding stretch occupies residues 157 to 167 (HLRKLRKRLLR). Position 161–164 (161–164 (LRKR)) interacts with heparin. Residues 209–286 (AGTLASQTLR…SWFEPLVEDM (78 aa)) form a lipid-binding and lipoprotein association region. 225-232 (HQKLRGRV) serves as a coordination point for heparin. Residues 262–313 (SQIRLQAEAFQARLKSWFEPLVEDMQRQWAGLVEKVQLAMATSSTSAPSENH) are homooligomerization. Residues 274 to 286 (RLKSWFEPLVEDM) form a specificity for association with VLDL region.

It belongs to the apolipoprotein A1/A4/E family. In terms of assembly, homotetramer. May interact with ABCA1; functionally associated with ABCA1 in the biogenesis of HDLs. May interact with APP/A4 amyloid-beta peptide; the interaction is extremely stable in vitro but its physiological significance is unclear. May interact with MAPT. May interact with MAP2. In the cerebrospinal fluid, interacts with secreted SORL1. Interacts with PMEL; this allows the loading of PMEL luminal fragment on ILVs to induce fibril nucleation. APOE exists as multiple glycosylated and sialylated glycoforms within cells and in plasma. The extent of glycosylation and sialylation are tissue and context specific. In terms of processing, glycated in plasma VLDL. Post-translationally, phosphorylated by FAM20C in the extracellular medium.

The protein resides in the secreted. Its subcellular location is the extracellular space. It localises to the extracellular matrix. It is found in the extracellular vesicle. The protein localises to the endosome. The protein resides in the multivesicular body. Functionally, APOE is an apolipoprotein, a protein associating with lipid particles, that mainly functions in lipoprotein-mediated lipid transport between organs via the plasma and interstitial fluids. APOE is a core component of plasma lipoproteins and is involved in their production, conversion and clearance. Apolipoproteins are amphipathic molecules that interact both with lipids of the lipoprotein particle core and the aqueous environment of the plasma. As such, APOE associates with chylomicrons, chylomicron remnants, very low density lipoproteins (VLDL) and intermediate density lipoproteins (IDL) but shows a preferential binding to high-density lipoproteins (HDL). It also binds a wide range of cellular receptors including the LDL receptor/LDLR and the very low-density lipoprotein receptor/VLDLR that mediate the cellular uptake of the APOE-containing lipoprotein particles. Finally, APOE also has a heparin-binding activity and binds heparan-sulfate proteoglycans on the surface of cells, a property that supports the capture and the receptor-mediated uptake of APOE-containing lipoproteins by cells. This chain is Apolipoprotein E (APOE), found in Balaenoptera acutorostrata scammoni (North Pacific minke whale).